Consider the following 647-residue polypeptide: Protein FAM161B (647 aa).

Disordered regions lie at residues 1–39 (MTVG…GDGL), 89–110 (SDPE…FFQD), and 135–167 (LNNL…SWAS). The segment covering 91–105 (PESDENLSEDEEDLE) has biased composition (acidic residues). Residues 262-292 (LEKEEQLKEAARQRDLAATAEAKISKQKATR) adopt a coiled-coil conformation. Polar residues predominate over residues 332–350 (PIASSSNRANPQPRTATRT). 2 disordered regions span residues 332–352 (PIAS…RTQQ) and 388–439 (KRRE…RSRS). A coiled-coil region spans residues 510–546 (LEEVFKAKLKENRNNDRKRAKEYKKELEEMKQRIQTR). The interval 583–647 (KGQGTRAVQE…QSPENLVSLA (65 aa)) is disordered. Basic and acidic residues predominate over residues 590-602 (VQEKETKIKDFPR). The span at 637–647 (HQSPENLVSLA) shows a compositional bias: polar residues.

This sequence belongs to the FAM161 family. In terms of assembly, interacts with FAM161A. In terms of tissue distribution, ubiquitously expressed.

This is Protein FAM161B (FAM161B) from Homo sapiens (Human).